Here is a 315-residue protein sequence, read N- to C-terminus: Protein ORANGE-LIKE, chloroplastic (315 aa).

A chloroplast-targeting transit peptide spans 1–16 (MTCFSSATPHRHHLLL). 2 consecutive transmembrane segments (helical) span residues 155–175 (LYST…LIAP) and 207–227 (IVAS…LIEV). The CR-type zinc-finger motif lies at 225–307 (IEVNNVKQQE…CTGMVTASEH (83 aa)). One copy of the CXXCXGXG motif repeat lies at 238–245 (CKYCLGTG). The stretch at 249 to 256 (CARCSASG) is one CXXCXXXG motif repeat. One copy of the CXXCXGXG motif repeat lies at 282–289 (CLNCSGAG). A CXXCXXXG motif repeat occupies 293–300 (CPTCLCTG).

It belongs to the orange-like family. In terms of assembly, interacts with PSY1.

Its subcellular location is the plastid. It is found in the chloroplast membrane. Its function is as follows. May be associated with accumulation of carotenoids in chromoplasts. The protein is Protein ORANGE-LIKE, chloroplastic (ORLIKE) of Arabidopsis thaliana (Mouse-ear cress).